The sequence spans 262 residues: Translation initiation factor 2 subunit alpha (262 aa).

The region spanning 15-86 is the S1 motif domain; sequence GELVVGTVHK…RKGHVDVSMK (72 aa).

This sequence belongs to the eIF-2-alpha family. As to quaternary structure, heterotrimer composed of an alpha, a beta and a gamma chain.

In terms of biological role, eIF-2 functions in the early steps of protein synthesis by forming a ternary complex with GTP and initiator tRNA. The protein is Translation initiation factor 2 subunit alpha (eif2a) of Methanothermobacter thermautotrophicus (strain ATCC 29096 / DSM 1053 / JCM 10044 / NBRC 100330 / Delta H) (Methanobacterium thermoautotrophicum).